We begin with the raw amino-acid sequence, 229 residues long: Uracil-DNA glycosylase (229 aa).

Residue Asp-64 is the Proton acceptor of the active site.

This sequence belongs to the uracil-DNA glycosylase (UDG) superfamily. UNG family.

The protein localises to the cytoplasm. It carries out the reaction Hydrolyzes single-stranded DNA or mismatched double-stranded DNA and polynucleotides, releasing free uracil.. In terms of biological role, excises uracil residues from the DNA which can arise as a result of misincorporation of dUMP residues by DNA polymerase or due to deamination of cytosine. The sequence is that of Uracil-DNA glycosylase from Salmonella choleraesuis (strain SC-B67).